A 494-amino-acid chain; its full sequence is Glycerol kinase (494 aa).

Threonine 12 lines the ADP pocket. Residues threonine 12, threonine 13, and serine 14 each contribute to the ATP site. Threonine 12 is a sn-glycerol 3-phosphate binding site. An ADP-binding site is contributed by arginine 16. Residues arginine 82, glutamate 83, tyrosine 134, and aspartate 241 each coordinate sn-glycerol 3-phosphate. Glycerol-binding residues include arginine 82, glutamate 83, tyrosine 134, aspartate 241, and glutamine 242. Threonine 263 and glycine 306 together coordinate ADP. 4 residues coordinate ATP: threonine 263, glycine 306, glutamine 310, and glycine 407. Residue glycine 407 participates in ADP binding.

The protein belongs to the FGGY kinase family.

It catalyses the reaction glycerol + ATP = sn-glycerol 3-phosphate + ADP + H(+). Its pathway is polyol metabolism; glycerol degradation via glycerol kinase pathway; sn-glycerol 3-phosphate from glycerol: step 1/1. Inhibited by fructose 1,6-bisphosphate (FBP). In terms of biological role, key enzyme in the regulation of glycerol uptake and metabolism. Catalyzes the phosphorylation of glycerol to yield sn-glycerol 3-phosphate. The protein is Glycerol kinase of Brachyspira hyodysenteriae (strain ATCC 49526 / WA1).